A 108-amino-acid chain; its full sequence is uncharacterized protein (108 aa).

This is an uncharacterized protein from Treponema pallidum (strain Nichols).